We begin with the raw amino-acid sequence, 152 residues long: uncharacterized protein (152 aa).

Transmembrane regions (helical) follow at residues 15 to 35 (IINV…IYDI), 43 to 63 (LVVA…LILT), and 117 to 137 (TFLL…KLLI).

This sequence to M.jannaschii MJ0129 and MJ0587.

Its subcellular location is the cell membrane. This is an uncharacterized protein from Methanocaldococcus jannaschii (strain ATCC 43067 / DSM 2661 / JAL-1 / JCM 10045 / NBRC 100440) (Methanococcus jannaschii).